The chain runs to 310 residues: Mitochondrial citrate transporter F (310 aa).

Solcar repeat units lie at residues 23-108 (KKVH…LKNH), 115-207 (PPGL…FKRL), and 216-303 (DNMG…HKKL). The next 6 helical transmembrane spans lie at 29–49 (FWFG…LDLV), 85–105 (SAAI…YEEL), 122–142 (IGMA…ADVL), 186–206 (NSTR…TFKR), 222–242 (FTAS…VDVI), and 275–296 (AFRG…TFIF).

The protein belongs to the mitochondrial carrier (TC 2.A.29) family.

The protein localises to the mitochondrion inner membrane. In terms of biological role, mitochondrial transporter that does not mediate citrate export from mitochondria to cytoplasm. Its exact function has still to be determined. The protein is Mitochondrial citrate transporter F of Aspergillus niger (strain ATCC 1015 / CBS 113.46 / FGSC A1144 / LSHB Ac4 / NCTC 3858a / NRRL 328 / USDA 3528.7).